Here is a 75-residue protein sequence, read N- to C-terminus: RNA-binding protein KhpA (75 aa).

The KH domain maps to 29–75 (KKVYEIVVNEEDVGQVIGKDGRTIKSLKILLSALMGDSKEITIKVVR).

Belongs to the KhpA RNA-binding protein family. As to quaternary structure, forms a complex with KhpB.

The protein resides in the cytoplasm. Its function is as follows. A probable RNA chaperone. Forms a complex with KhpB which binds to cellular RNA and controls its expression. Plays a role in peptidoglycan (PG) homeostasis and cell length regulation. This is RNA-binding protein KhpA from Thermotoga maritima (strain ATCC 43589 / DSM 3109 / JCM 10099 / NBRC 100826 / MSB8).